Reading from the N-terminus, the 989-residue chain is MKVVNLKQAILQAWKERWSDYQWAINIKKNCPKGATWDYLNLAEALLEQAMIGPSPNPLILSYLKYAISSQMVSYSSVLTAISKFDDFSRELCVKSLLEIMDMFSNRLSCHGKAEECIGLCRAMLCTVVWLLQGCAWYCERLRDPNDFSALESSLRACLERMANLLHSTKNRALVHIARLEEQASWTNVEQAVLKLTENLSAVTNPTLKESLEECVSLVKSIPQMLCLQCDPPVHTTFPSVHAFIMLEGTMNLTGETQPLVEQLMMIKRMQRIPAPLFVLEIWKACFTGLIESPEGNEELKWTAFTFLKIPQVLLRLKKYPQGEKTQDFTEDVNVAFEYLLNLTPLLDKADQRCNCDCLSLLLQECNKLGLLSEANTATLTAKRSEDREHAPRLKTAENANIQPNPGLILRAEPTVTNILKTVDADHSKSPEGLLGVLGHMLSGKSLDLLLAAAAATGKLKSFARKFIKLNEFPKHISGEGSKSASVRALLFDISFLMLCHVVQTYGSEVILSDPSPSSETPFFETWLQTCMPEEGKTLNPDHPCFRPESGKVESLVALLNSSSEMKLVQMKWHEICLSTPAAILEVLNAWENGVLSVEAVQKITDNIKGKVCSMAICAVAWLVAHVRMLGLDEREKPQTMIRQLMTPMSGENTLQFYHERVVIMSSILEHMCADVFQQTGLSLRPAVEGQEPIPYRNLLPARLPIRQALQSQFRKVLEKGWVDSHAFHLFENLLHMGGVFWFTNNLVKELLKETRKEWASRVVELLYSIFCLDTQQITLTLLGHILPRLLTDPAHWHSLADPPGRALAKLSVWCALSSYSSHHKGQASARQRKRHREDIEDYTSLFPLDDTQPSKLMRLLSSNEDENSMLSSPGDRSISSSLSASQLHTVNMRDPLNRVLANLFLLISSQLGSKTAGPHTQFVQSFVEECVDCSEQGSRSSILQFMPFTMISELVKLQSLAKPKTVLSITDLSLPLGRRMAAKAIAAL.

6 consecutive short sequence motifs (LXXLL motif) follow at residues 343–347 (LTPLL), 359–363 (LSLLL), 447–451 (LDLLL), 556–560 (LVALL), 787–791 (LPRLL), and 857–861 (LMRLL).

This sequence belongs to the Mediator complex subunit 24 family. In terms of assembly, component of the Mediator complex.

It localises to the nucleus. Functionally, component of the Mediator complex, a coactivator involved in the regulated transcription of nearly all RNA polymerase II-dependent genes. Mediator functions as a bridge to convey information from gene-specific regulatory proteins to the basal RNA polymerase II transcription machinery. Mediator is recruited to promoters by direct interactions with regulatory proteins and serves as a scaffold for the assembly of a functional preinitiation complex with RNA polymerase II and the general transcription factors. Required for proliferation of enteric nervous system precursors. Required for the development of dopaminergic amacrine cells and rod photoreceptor cells in the retina. The sequence is that of Mediator of RNA polymerase II transcription subunit 24 (med24) from Danio rerio (Zebrafish).